Consider the following 364-residue polypeptide: Peptide chain release factor 1 (364 aa).

The residue at position 237 (Gln-237) is an N5-methylglutamine.

Belongs to the prokaryotic/mitochondrial release factor family. Methylated by PrmC. Methylation increases the termination efficiency of RF1.

It localises to the cytoplasm. Peptide chain release factor 1 directs the termination of translation in response to the peptide chain termination codons UAG and UAA. This is Peptide chain release factor 1 from Mycoplasma mycoides subsp. mycoides SC (strain CCUG 32753 / NCTC 10114 / PG1).